Consider the following 371-residue polypeptide: Gustatory and pheromone receptor 39a, isoform A (371 aa).

Residues 1–41 are Cytoplasmic-facing; the sequence is MSKVCRDLRIYLRLLHIMGMMCWHFDSDHCQLVATSGSERY. Residues 42-62 traverse the membrane as a helical segment; the sequence is AVVYAGCILVSTTAGFIFALL. Over 63–80 the chain is Extracellular; it reads HPSRFHIAIYNQTGNFYE. Asn73 carries N-linked (GlcNAc...) asparagine glycosylation. Residues 81-101 traverse the membrane as a helical segment; the sequence is AVIFRSTCVVLFLVYVILYAW. The Cytoplasmic segment spans residues 102-127; that stretch reads RHRYRDLVQHILRLNRRCASSCTNQQ. The chain crosses the membrane as a helical span at residues 128–148; sequence FLHNIILYGMLTILCFGNYLH. Residues 149 to 161 are Extracellular-facing; that stretch reads GYTRAGLATLPLA. Residues 162-182 form a helical membrane-spanning segment; it reads LCMLVYIFAFLVLCLLLMFFV. Topologically, residues 183 to 228 are cytoplasmic; the sequence is SLKQVMTAGLIHYNQQLCQGDLISGLRGRQQILKLCGGELNECFGL. The helical transmembrane segment at 229-249 threads the bilayer; sequence LMLPIVALVLLMAPSGPFFLI. Over 250–263 the chain is Extracellular; the sequence is STVLEGKFRPDECL. Residues 264-284 traverse the membrane as a helical segment; it reads IMLLTSSTWDTPWMIMLVLML. The Cytoplasmic segment spans residues 285 to 340; sequence RTNGISEEANKTAKMLTKVPRTGTGLDRMIEKFLLKNLRQKPILTAYGFFALDKST. Residues 341 to 361 form a helical membrane-spanning segment; that stretch reads LFKLFTAIFTYMVILVQFKEM. At 362–371 the chain is on the extracellular side; it reads ENSTKSINKF. An N-linked (GlcNAc...) asparagine glycan is attached at Asn363.

This sequence belongs to the insect chemoreceptor superfamily. Gustatory receptor (GR) family. Gr21a subfamily. In terms of tissue distribution, expressed in the adult labellar chemosensory neurons, and adult thorax and wing. In larvae, is expressed in neurons of the posterior pharyngeal sense organ.

Its subcellular location is the cell membrane. Functionally, gustatory receptor which mediates acceptance or avoidance behavior, depending on its substrates. Plays a role in sustaining courtship behavior in males, possibly through the reception of a stimulating arrestant pheromone. The protein is Gustatory and pheromone receptor 39a, isoform A (Gr39a) of Drosophila melanogaster (Fruit fly).